We begin with the raw amino-acid sequence, 1544 residues long: MEAQSHSSTTTEKKKVENSIVKCSNRTDVSEKAVASSTTSNEDESPGQTYHRERRNAITMQPQGGQGLSKISEEPSTSSEERASLIKKEIHGSISHLPEPSVPYRGTLVTMDPRNGYMDPHYHPPHLFQAFHPPVPIDARHHEGRYHYEPSPIPPLHVPSALSSSPTYSDLPFIRISPHRNPAAASESPFSTPHPYINPYMDYIRSLHSSPSLSMISAARGLSPTDAPHAGVSPAEYYHQMALLAGQRSPYADIIPSAATAGAGALHMEYLHAMDSTRFPSPRLSARPSRKRTLSISPLSDHSFDLQTMIRTSPNSLVTILNNSCSSWSASGSYGHLSASAISPALSFTYPPTPVSLQQMHQQIISRQQTLGSAFGHSPPLIHPAPTFPTQRPIPGIPSVLNPVQVSSGPSESTQHNKPTSESAVSSTGDPMHNKRSKIKPDEDLPSPGAGSVQEQPEGMTPVKEEGDKDESKQEPEVVYETNCHWEGCSREFDTQEQLVHHINNDHIHGEKKEFVCRWLDCSREQKPFKAQYMLVVHMRRHTGEKPHKCTFEGCTKAYSRLENLKTHLRSHTGEKPYVCEHEGCNKAFSNASDRAKHQNRTHSNEKPYVCKIPGCTKRYTDPSSLRKHVKTVHGPEAHVTKKQRGDIHPRPPPPRDPGSHSQTRSPGQQTQGATGEQKDLNSTTSRREECLQVKAVKSEKPMTSQPSPGGQSTCSSEQSPISNYSNNGIELTLTGGGSVGDLSVIDETPIMDSTISTATTALGLQARRNMTGTKWMEQVKLERLKQVNGMLPRLNPVPPSKAPTLPPLIGNGTQSNSSCSVGGSMTILPNRNELSSTDITVLNMLNRRDSNTSTISSAYLSSRRSSGISPCFSSRRSSDASQAEGRPQNVSVADSYDPISTDASRRSSEASQCDDLPSLLSLTPAQQYRLKAKYAAATGGPPPTPLPNMERMSLKTRMALLGDCRESGISPLPPVNAPRRCSDGGANGYSRRHLLSHDALGNGTRRASDPVRMVSNNLSVPRVQHFNSLNSFNSPALPPSMEKRNLVLQNCTHSEGGVFRGFSSPCPPSISENVTLEAVTMEAGGSLNDEDLLPDDVVQYLNSQNQGTCDHLLNNVLDSNKMHHSVVLGNNNPSSFDRAPPASSQPAGSEVSKSDLPIQWNEVSSGSSDLSPTKLKCSQRSAVQQARAFGLYNNMMVQQQNLQRGNVYQQNGYQNLMENNGSYSLQQNTVLGSGASSSFGMQPNKPYGESVSRQPMIFGAMDSSCGITVQGQKLRSSNMPVSGNQQNFGHPIASSDQATSMANGMQNRNVMEQEYLQNELVGDGIHYQGVNQSSPMTLGQVSPTSQSSLHQGPQSCPPVSHTIGNQSSGLSVAKSYQPCANYSGNRRQNVLRNNLAQQQGHVSDGNQTYRVNTIKLEMQGQSQQFCSNMQNYSGQLYDQTTGFSHQAMKIGSSFFVSEANCLLQETATANSSELLSPGANQVSSTVDSLDSNSLEGVQIDFDAIIDDGDHVSLISGALSPSIIQNLSRNSSRLTTPRASLTFP.

Polar residues-rich tracts occupy residues 1-10 and 402-429; these read MEAQSHSSTT and NPVQ…SSTG. Disordered regions lie at residues 1-83 and 373-477; these read MEAQ…EERA and SAFG…QEPE. The span at 463–476 shows a compositional bias: basic and acidic residues; sequence VKEEGDKDESKQEP. Residues 482–509 form a C2H2-type 1 zinc finger; sequence TNCHWEGCSREFDTQEQLVHHINNDHIH. Residues 520–542 form a C2H2-type 2; degenerate zinc finger; that stretch reads LDCSREQKPFKAQYMLVVHMRRH. 3 C2H2-type zinc fingers span residues 548 to 572, 578 to 603, and 609 to 634; these read HKCT…LRSH, YVCE…NRTH, and YVCK…KTVH. Disordered stretches follow at residues 622–728, 865–919, 1126–1155, and 1327–1368; these read DPSS…YSNN, RSSG…DLPS, SVVL…VSKS, and HYQG…GNQS. Positions 634–650 are enriched in basic and acidic residues; it reads HGPEAHVTKKQRGDIHP. A compositionally biased stretch (polar residues) spans 660-685; sequence SHSQTRSPGQQTQGATGEQKDLNSTT. The segment covering 686-701 has biased composition (basic and acidic residues); sequence SRREECLQVKAVKSEK. Polar residues predominate over residues 702-728; that stretch reads PMTSQPSPGGQSTCSSEQSPISNYSNN. Low complexity predominate over residues 865–882; sequence RSSGISPCFSSRRSSDAS. Positions 1330-1355 are enriched in polar residues; sequence GVNQSSPMTLGQVSPTSQSSLHQGPQ.

This sequence belongs to the GLI C2H2-type zinc-finger protein family. In terms of processing, phosphorylation is essential for its proteolytic processing. Post-translationally, the repressor form (GLI3R), a C-terminally truncated form is generated from the full-length GLI3 protein (GLI3FL) through proteolytic processing.

It localises to the nucleus. The protein resides in the cytoplasm. Its function is as follows. Has a dual function as a transcriptional activator and a repressor of the sonic hedgehog (Shh) pathway, and plays a role in limb development. The full-length GLI3 form (GLI3FL) acts as an activator (GLI3A) while GLI3R, its C-terminally truncated form, acts as a repressor. The protein is Transcriptional activator GLI3 (GLI3) of Gallus gallus (Chicken).